A 289-amino-acid polypeptide reads, in one-letter code: ATP synthase mitochondrial F1 complex assembly factor 2 (289 aa).

Residues 1-40 constitute a mitochondrion transit peptide; that stretch reads MWRSCLRLRDGGRRLLNRPAGGPSASMSPGPTIPSPARAY. Residues 13-40 form a disordered region; it reads RRLLNRPAGGPSASMSPGPTIPSPARAY. Lys133 is modified (N6-succinyllysine).

It belongs to the ATP12 family. Interacts with ATP5F1B; involved in the assembly of the F1 component of the mitochondrial ATP synthase (ATPase). Interacts with FMC1. As to expression, widely expressed.

It is found in the mitochondrion inner membrane. Functionally, plays a role in the assembly of the F1 component of the mitochondrial ATP synthase (ATPase). The sequence is that of ATP synthase mitochondrial F1 complex assembly factor 2 from Homo sapiens (Human).